Here is a 493-residue protein sequence, read N- to C-terminus: Probable cytosol aminopeptidase (493 aa).

Residues lysine 262 and aspartate 267 each contribute to the Mn(2+) site. The active site involves lysine 274. Positions 285, 344, and 346 each coordinate Mn(2+). Residue arginine 348 is part of the active site.

Belongs to the peptidase M17 family. Mn(2+) serves as cofactor.

It is found in the cytoplasm. The enzyme catalyses Release of an N-terminal amino acid, Xaa-|-Yaa-, in which Xaa is preferably Leu, but may be other amino acids including Pro although not Arg or Lys, and Yaa may be Pro. Amino acid amides and methyl esters are also readily hydrolyzed, but rates on arylamides are exceedingly low.. It carries out the reaction Release of an N-terminal amino acid, preferentially leucine, but not glutamic or aspartic acids.. Its function is as follows. Presumably involved in the processing and regular turnover of intracellular proteins. Catalyzes the removal of unsubstituted N-terminal amino acids from various peptides. In Xanthomonas campestris pv. campestris (strain 8004), this protein is Probable cytosol aminopeptidase.